The following is a 2312-amino-acid chain: Protein Ycf2 (2312 aa).

Position 1630–1637 (1630–1637 (GSIGTGRS)) interacts with ATP.

It belongs to the Ycf2 family.

The protein localises to the plastid. It localises to the chloroplast stroma. Probable ATPase of unknown function. Its presence in a non-photosynthetic plant (Epifagus virginiana) and experiments in tobacco indicate that it has an essential function which is probably not related to photosynthesis. The polypeptide is Protein Ycf2 (Manihot esculenta (Cassava)).